A 322-amino-acid polypeptide reads, in one-letter code: tRNA dimethylallyltransferase (322 aa).

19–26 is an ATP binding site; that stretch reads GPTASGKT. 21–26 is a substrate binding site; it reads TASGKT. Interaction with substrate tRNA regions lie at residues 44-47, 168-172, and 255-260; these read DSAL, QRIQR, and RCVGYR.

This sequence belongs to the IPP transferase family. As to quaternary structure, monomer. Mg(2+) is required as a cofactor.

It carries out the reaction adenosine(37) in tRNA + dimethylallyl diphosphate = N(6)-dimethylallyladenosine(37) in tRNA + diphosphate. Catalyzes the transfer of a dimethylallyl group onto the adenine at position 37 in tRNAs that read codons beginning with uridine, leading to the formation of N6-(dimethylallyl)adenosine (i(6)A). The protein is tRNA dimethylallyltransferase of Cupriavidus taiwanensis (strain DSM 17343 / BCRC 17206 / CCUG 44338 / CIP 107171 / LMG 19424 / R1) (Ralstonia taiwanensis (strain LMG 19424)).